A 132-amino-acid chain; its full sequence is Small ribosomal subunit protein uS11 (132 aa).

The interval 113-132 is disordered; it reads VTPIPHDGTRAPGGKRGRRV.

This sequence belongs to the universal ribosomal protein uS11 family. In terms of assembly, part of the 30S ribosomal subunit.

Located on the platform of the 30S subunit. In Methanocella arvoryzae (strain DSM 22066 / NBRC 105507 / MRE50), this protein is Small ribosomal subunit protein uS11.